Here is a 420-residue protein sequence, read N- to C-terminus: MSLFNSANKVIGGVLKFNPSKYQVRYLNLHEYQSKSLMDKYGVNTQKWRVVTKASDAIKAASELNGELVVKAQVHAGGRGKGSFIETGFKGGVHLCKTGKEAERLCDEMLGKHLVTKQTTKEGTKVQSVMLAESVDPKRELYFAIVMDRKYGGPVMIASPQGGVDIESVAEETPDLIFKEPIDIVKGIRPEQTKNLAEKLGFTGEKAKIAQQQMENLYQLFIKSDATQVEINPFAETTDGQVICMDAKINFDDNASFRQKEIFEMRDTAEEDPREVEAGKFGLNYIGLDGNIGCMVNGAGLAMATMDIIKLKGGIPANFLDVGGSASEQAVTEAFKILTKDPRVKCLLVNIFGGIMKCDIIASGIVNASKQVGLKIPLVVRLEGTNVNIGKEILEKSGLNITSASDLDDAAIKAVNCLKK.

Residues 35 to 263 (KSLMDKYGVN…NASFRQKEIF (229 aa)) enclose the ATP-grasp domain. GTP is bound by residues Gln-46, 78-80 (GRG), and Val-135. Mg(2+) contacts are provided by Asn-232 and Asp-246. Residues Asn-297 and 354 to 356 (GIM) each bind substrate.

This sequence belongs to the succinate/malate CoA ligase beta subunit family. GTP-specific subunit beta subfamily. As to quaternary structure, heterodimer of an alpha and a beta subunit. The beta subunit determines specificity for GTP. Requires Mg(2+) as cofactor.

Its subcellular location is the mitochondrion. The catalysed reaction is GTP + succinate + CoA = succinyl-CoA + GDP + phosphate. It participates in carbohydrate metabolism; tricarboxylic acid cycle; succinate from succinyl-CoA (ligase route): step 1/1. Its function is as follows. GTP-specific succinyl-CoA synthetase functions in the citric acid cycle (TCA), coupling the hydrolysis of succinyl-CoA to the synthesis of GTP and thus represents the only step of substrate-level phosphorylation in the TCA. The beta subunit provides nucleotide specificity of the enzyme and binds the substrate succinate, while the binding sites for coenzyme A and phosphate are found in the alpha subunit. The polypeptide is Succinate--CoA ligase [GDP-forming] subunit beta, mitochondrial (scsB) (Dictyostelium discoideum (Social amoeba)).